The sequence spans 214 residues: Pyrrolidone-carboxylate peptidase 2 (214 aa).

Residues Glu-78, Cys-141, and His-165 contribute to the active site.

Belongs to the peptidase C15 family. In terms of assembly, homotetramer.

It is found in the cytoplasm. It catalyses the reaction Release of an N-terminal pyroglutamyl group from a polypeptide, the second amino acid generally not being Pro.. In terms of biological role, removes 5-oxoproline from various penultimate amino acid residues except L-proline. This Streptococcus pneumoniae serotype 4 (strain ATCC BAA-334 / TIGR4) protein is Pyrrolidone-carboxylate peptidase 2.